A 432-amino-acid polypeptide reads, in one-letter code: Adenylosuccinate synthetase (432 aa).

Residues 12–18 (GDEGKGK) and 40–42 (GHT) contribute to the GTP site. The active-site Proton acceptor is the Asp13. Mg(2+) contacts are provided by Asp13 and Gly40. IMP contacts are provided by residues 13 to 16 (DEGK), 38 to 41 (NAGH), Thr128, Arg142, Gln223, Thr238, and Arg302. Catalysis depends on His41, which acts as the Proton donor. 298–304 (TVTGRPR) contributes to the substrate binding site. GTP contacts are provided by residues Arg304, 330 to 332 (LLD), and 412 to 414 (SVG).

It belongs to the adenylosuccinate synthetase family. In terms of assembly, homodimer. Mg(2+) serves as cofactor.

It localises to the cytoplasm. It catalyses the reaction IMP + L-aspartate + GTP = N(6)-(1,2-dicarboxyethyl)-AMP + GDP + phosphate + 2 H(+). Its pathway is purine metabolism; AMP biosynthesis via de novo pathway; AMP from IMP: step 1/2. In terms of biological role, plays an important role in the de novo pathway of purine nucleotide biosynthesis. Catalyzes the first committed step in the biosynthesis of AMP from IMP. In Limosilactobacillus reuteri (strain DSM 20016) (Lactobacillus reuteri), this protein is Adenylosuccinate synthetase.